Here is a 342-residue protein sequence, read N- to C-terminus: Tetraacyldisaccharide 4'-kinase (342 aa).

Position 68–75 (68–75 (TVGGTGKT)) interacts with ATP.

It belongs to the LpxK family.

It carries out the reaction a lipid A disaccharide + ATP = a lipid IVA + ADP + H(+). Its pathway is glycolipid biosynthesis; lipid IV(A) biosynthesis; lipid IV(A) from (3R)-3-hydroxytetradecanoyl-[acyl-carrier-protein] and UDP-N-acetyl-alpha-D-glucosamine: step 6/6. Transfers the gamma-phosphate of ATP to the 4'-position of a tetraacyldisaccharide 1-phosphate intermediate (termed DS-1-P) to form tetraacyldisaccharide 1,4'-bis-phosphate (lipid IVA). This Burkholderia vietnamiensis (strain G4 / LMG 22486) (Burkholderia cepacia (strain R1808)) protein is Tetraacyldisaccharide 4'-kinase.